We begin with the raw amino-acid sequence, 131 residues long: Fumarate reductase subunit C (131 aa).

The next 3 helical transmembrane spans lie at 30 to 50, 57 to 77, and 109 to 129; these read EGTA…LFAL, WAGF…LITL, and IIKS…FVAL.

Belongs to the FrdC family. In terms of assembly, part of an enzyme complex containing four subunits: a flavoprotein (FrdA), an iron-sulfur protein (FrdB), and two hydrophobic anchor proteins (FrdC and FrdD).

The protein resides in the cell inner membrane. In terms of biological role, two distinct, membrane-bound, FAD-containing enzymes are responsible for the catalysis of fumarate and succinate interconversion; fumarate reductase is used in anaerobic growth, and succinate dehydrogenase is used in aerobic growth. Anchors the catalytic components of the fumarate reductase complex to the cell inner membrane, binds quinones. The polypeptide is Fumarate reductase subunit C (Shigella flexneri).